The primary structure comprises 444 residues: Deoxyguanosinetriphosphate triphosphohydrolase-like protein (444 aa).

Residues 1 to 26 (MIASPWHERRLNEDKKRRNDHRSPFQ) are disordered. The region spanning 59–250 (RLTHSLEVSQ…MELADDIAYA (192 aa)) is the HD domain.

It belongs to the dGTPase family. Type 2 subfamily.

This chain is Deoxyguanosinetriphosphate triphosphohydrolase-like protein, found in Shewanella woodyi (strain ATCC 51908 / MS32).